Consider the following 648-residue polypeptide: Transmembrane 9 superfamily member 8 (648 aa).

Positions 1–33 (MAMEFLRSSRRILESSGCAIALIFLLFIHGAHS) are cleaved as a signal peptide. Over 34-285 (FYLPGVAPQD…YLLMSDNQIH (252 aa)) the chain is Lumenal. Residues 286-306 (WFSIVNSLMIVLFLSGMVAMI) form a helical membrane-spanning segment. Topologically, residues 307–355 (MLRTLYRDISRYNELETQEEAQEETGWKLVHGDVFRLPTNSDLLCVYVG) are cytoplasmic. The chain crosses the membrane as a helical span at residues 356–376 (TGVQCLGMVFVTMIFAMLGFL). Over 377 to 381 (SPSNR) the chain is Lumenal. The chain crosses the membrane as a helical span at residues 382–402 (GGLMTAMLLLWVFMGLFAGYA). Over 403–422 (SSRLYKMFKGTEWKRIAFRT) the chain is Cytoplasmic. The helical transmembrane segment at 423-443 (AFLFPAVVSAIFFVLNALIWG) threads the bilayer. The Lumenal portion of the chain corresponds to 444 to 455 (QKSSGAVPFGTM). A helical membrane pass occupies residues 456 to 476 (FALIFLWFGISVPLVFVGGYI). The Cytoplasmic segment spans residues 477 to 506 (GFKKPAADDPVKTNKIPRQIPEQAWYMNPV). The helical transmembrane segment at 507–527 (FSILIGGILPFGAVFIELFFI) threads the bilayer. Topologically, residues 528-538 (LTSIWLNQFYY) are lumenal. The chain crosses the membrane as a helical span at residues 539–559 (IFGFLFLVFVILIVTCAEITV). Topologically, residues 560 to 577 (VLCYFQLCSEDYLWWWRS) are cytoplasmic. The chain crosses the membrane as a helical span at residues 578–598 (YLTSGSSALYLFLYATFYFFT). Over 599–604 (KLQITK) the chain is Lumenal. A helical membrane pass occupies residues 605–625 (LVSAMLYFGYMLIASYAFFVL). The Cytoplasmic portion of the chain corresponds to 626-648 (TGTIGFYACLWFTRLIYSSVKID). The Endoplasmic reticulum export signal motif lies at 637–642 (FTRLIY). The Golgi retention signal signature appears at 646–648 (KID).

This sequence belongs to the nonaspanin (TM9SF) (TC 9.A.2) family.

It localises to the endosome membrane. It is found in the golgi apparatus membrane. This chain is Transmembrane 9 superfamily member 8, found in Arabidopsis thaliana (Mouse-ear cress).